We begin with the raw amino-acid sequence, 137 residues long: Large ribosomal subunit protein uL16 (137 aa).

The protein belongs to the universal ribosomal protein uL16 family. In terms of assembly, part of the 50S ribosomal subunit.

In terms of biological role, binds 23S rRNA and is also seen to make contacts with the A and possibly P site tRNAs. The chain is Large ribosomal subunit protein uL16 from Cereibacter sphaeroides (strain ATCC 17029 / ATH 2.4.9) (Rhodobacter sphaeroides).